Reading from the N-terminus, the 96-residue chain is Co-chaperonin GroES (96 aa).

This sequence belongs to the GroES chaperonin family. Heptamer of 7 subunits arranged in a ring. Interacts with the chaperonin GroEL.

The protein localises to the cytoplasm. Functionally, together with the chaperonin GroEL, plays an essential role in assisting protein folding. The GroEL-GroES system forms a nano-cage that allows encapsulation of the non-native substrate proteins and provides a physical environment optimized to promote and accelerate protein folding. GroES binds to the apical surface of the GroEL ring, thereby capping the opening of the GroEL channel. This chain is Co-chaperonin GroES, found in Geobacter sp. (strain M21).